We begin with the raw amino-acid sequence, 543 residues long: EH domain-containing protein 2 (543 aa).

Phosphoserine is present on residues Ser3 and Ser44. Residues 55-286 (FDGKPMVLVA…DLFRDIQGLP (232 aa)) form the Dynamin-type G domain. The tract at residues 65 to 72 (GQYSTGKT) is G1 motif. 65–72 (GQYSTGKT) serves as a coordination point for ATP. The G2 motif stretch occupies residues 91-92 (EP). The tract at residues 153 to 156 (DTPG) is G3 motif. The segment at 219–222 (NKAD) is G4 motif. Lys220 lines the ATP pocket. Residue Val243 is a region of interest, G5 motif. An ATP-binding site is contributed by Trp258. A mediates membrane-binding region spans residues 320 to 340 (TVFGKENKKKQLILKLPVIFA). 5 positions are modified to phosphoserine: Ser438, Ser468, Ser470, Ser484, and Ser493. One can recognise an EH domain in the interval 449–537 (DKSKYDEIFY…RRLVPPSKRR (89 aa)). Residues 481–516 (LPNSVLGRIWKLSDVDRDGMLDDEEFALASHLIEAK) enclose the EF-hand domain. The Ca(2+) site is built by Asp494, Asp496, Asp498, Met500, and Glu505. A disordered region spans residues 521 to 543 (GLPTNLPRRLVPPSKRRQKGSAE). Residues 534-543 (SKRRQKGSAE) show a composition bias toward basic residues.

The protein belongs to the TRAFAC class dynamin-like GTPase superfamily. Dynamin/Fzo/YdjA family. EHD subfamily. As to quaternary structure, homodimer and homooligomer. Interacts with EHD1. May also interact with EHD3 and EHD4. Interacts with MYOF. Interacts with EHBP1. Interacts with FER1L5 (via second C2 domain). Interacts with CAV1 in a cholesterol-dependent manner. Interacts (via EH domain) with PACSIN2 (via NPF motifs); this interaction probably stabilizes the caveolae. Detected in lung and adipocytes. Detected at lower levels in heart and skeletal muscle.

The protein resides in the cell membrane. The protein localises to the membrane. Its subcellular location is the caveola. It is found in the endosome membrane. It localises to the cytoplasm. The protein resides in the cytosol. The very low intrinsic ATPase activity is increased upon interaction with liposomes. ATP- and membrane-binding protein that controls membrane reorganization/tubulation upon ATP hydrolysis. Plays a role in membrane trafficking between the plasma membrane and endosomes. Important for the internalization of GLUT4. Required for fusion of myoblasts to skeletal muscle myotubes. Required for normal translocation of FER1L5 to the plasma membrane. Regulates the equilibrium between cell surface-associated and cell surface-dissociated caveolae by constraining caveolae at the cell membrane. The chain is EH domain-containing protein 2 from Mus musculus (Mouse).